A 473-amino-acid polypeptide reads, in one-letter code: Photosystem II CP43 reaction center protein (473 aa).

The propeptide occupies 1–14; sequence MKTLYSLRRFYPVE. Threonine 15 is modified (N-acetylthreonine). The residue at position 15 (threonine 15) is a Phosphothreonine. A run of 5 helical transmembrane segments spans residues 69-93, 134-155, 178-200, 255-275, and 291-312; these read LFEV…PHLA, LLGP…KDRN, KALY…RKIT, KPFA…LSYS, and WFNN…ASQA. Residue glutamate 367 participates in [CaMn4O5] cluster binding. The chain crosses the membrane as a helical span at residues 447–471; that stretch reads RARAAAAGFEKGIDRDFEPVLSMTP.

The protein belongs to the PsbB/PsbC family. PsbC subfamily. In terms of assembly, PSII is composed of 1 copy each of membrane proteins PsbA, PsbB, PsbC, PsbD, PsbE, PsbF, PsbH, PsbI, PsbJ, PsbK, PsbL, PsbM, PsbT, PsbX, PsbY, PsbZ, Psb30/Ycf12, at least 3 peripheral proteins of the oxygen-evolving complex and a large number of cofactors. It forms dimeric complexes. Binds multiple chlorophylls and provides some of the ligands for the Ca-4Mn-5O cluster of the oxygen-evolving complex. It may also provide a ligand for a Cl- that is required for oxygen evolution. PSII binds additional chlorophylls, carotenoids and specific lipids. is required as a cofactor.

Its subcellular location is the plastid. The protein resides in the chloroplast thylakoid membrane. In terms of biological role, one of the components of the core complex of photosystem II (PSII). It binds chlorophyll and helps catalyze the primary light-induced photochemical processes of PSII. PSII is a light-driven water:plastoquinone oxidoreductase, using light energy to abstract electrons from H(2)O, generating O(2) and a proton gradient subsequently used for ATP formation. This chain is Photosystem II CP43 reaction center protein, found in Vitis vinifera (Grape).